A 168-amino-acid polypeptide reads, in one-letter code: Pleiotrophin (168 aa).

The N-terminal stretch at 1 to 32 is a signal peptide; it reads MSSQQYQQQRRKFAAAFLALIFILAAVDTAEA. 5 disulfides stabilise this stretch: cysteine 47/cysteine 76, cysteine 55/cysteine 85, cysteine 62/cysteine 89, cysteine 99/cysteine 131, and cysteine 109/cysteine 141. Chondroitin sulfate binding regions lie at residues 92 to 99 and 123 to 131; these read KKQFGAEC and KRALHNADC. A disordered region spans residues 139-168; that stretch reads KPCGKLTKPKPQAESKKKKKEGKKQEKMLD. The chondroitin sulfate A binding stretch occupies residues 147–168; that stretch reads PKPQAESKKKKKEGKKQEKMLD.

The protein belongs to the pleiotrophin family. As to quaternary structure, interacts with ALK and NEK6. Interacts with PTPRZ1 (via chondroitin sulfate groups); promotes formation of homooligomers; oligomerization impairs tyrosine phosphatase activity. Forms a complex with PTPRZ1 and CTNNB1; this complex inactivates PTPRZ1 protein tyrosine phosphatase activity through PTN interaction and stimulates tyrosine phosphorylation of CTNNB1. Interacts with ITGB3 and ITGA5. Forms a complex with PTPRZ1 and integrin alpha-V/beta-3 (ITGAV:ITGB3) that stimulates endothelial cell migration through ITGB3 'Tyr-773' phosphorylation. Interacts with SDC3 (via heparan sulfate chains); this interaction mediates the neurite outgrowth-promoting signal from PTN to the cytoskeleton of growing neurites; this interaction mediates osteoblast recruitment. Interacts with GPC2 (via heparan sulfate); this interaction promotes neurite outgrowth through binding of PTN with chondroitin sulfate of proteoglycans, thereby releasing PTPRS of chondroitin sulfate proteoglycans (CSPGs) and leading to binding with heparan sulfate of GPC2. In terms of processing, phosphorylated by NEK6. Osteoblast and brain. Expressed in the follicular epithelium and granulosa cells of the ovary. Strongly expressed in the uterus of newborn mice, and the degree of expression decreased in one-week-old mice, although the expression continues even in the uteri of adult mice. Expression gradually increases from proestrus to estrus, then decreases sharply, and thereafter gradually increased again. strongly expressed in the cochlea of WT mice 1 week after birth, and then the expression decreased and was undetectable by week 8 after birth. Expressed around the cell soma of osteocytes and apparently captured in the unmineralized interstitial matrix surrounding the cells. Furthermore distributed throughout the intraosseous canalicular porosity, being localized in the unmineralized matrix around the cell processes. Strongly expressed in the innermost layer of the periosteum.

Its subcellular location is the secreted. In terms of biological role, secreted growth factor that mediates its signal through cell-surface proteoglycan and non-proteoglycan receptors. Binds cell-surface proteoglycan receptor via their chondroitin sulfate (CS) groups. Thereby regulates many processes like cell proliferation, cell survival, cell growth, cell differentiation and cell migration in several tissues namely neuron and bone. Also plays a role in synaptic plasticity and learning-related behavior by inhibiting long-term synaptic potentiation. Binds PTPRZ1, leading to neutralization of the negative charges of the CS chains of PTPRZ1, inducing PTPRZ1 clustering, thereby causing the dimerization and inactivation of its phosphatase activity leading to increased tyrosine phosphorylation of each of the PTPRZ1 substrates like ALK or AFAP1L2 in order to activate the PI3K-AKT pathway. Through PTPRZ1 binding controls oligodendrocyte precursor cell differentiation by enhancing the phosphorylation of AFAP1L2 in order to activate the PI3K-AKT pathway. Forms a complex with PTPRZ1 and integrin alpha-V/beta-3 (ITGAV:ITGB3) that stimulates endothelial cell migration through SRC dephosphorylation and activation that consequently leads to ITGB3 'Tyr-773' phosphorylation. In adult hippocampus promotes dendritic arborization, spine development, and functional integration and connectivity of newborn granule neurons through ALK by activating AKT signaling pathway. Binds GPC2 and chondroitin sulfate proteoglycans (CSPGs) at the neuron surface, leading to abrogation of binding between PTPRS and CSPGs and neurite outgrowth promotion. Binds SDC3 and mediates bone formation by recruiting and attaching osteoblasts/osteoblast precursors to the sites for new bone deposition. Binds ALK and promotes cell survival and cell proliferation through MAPK pathway activation. Inhibits proliferation and enhances differentiation of neural stem cells by inhibiting FGF2-induced fibroblast growth factor receptor signaling pathway. Mediates regulatory mechanisms in normal hemostasis and in hematopoietic regeneration and in maintaining the balance of myeloid and lymphoid regeneration. In addition may play a role in the female reproductive system, auditory response and the progesterone-induced decidualization pathway. The protein is Pleiotrophin of Mus musculus (Mouse).